Consider the following 396-residue polypeptide: 1-deoxy-D-xylulose 5-phosphate reductoisomerase (396 aa).

NADPH contacts are provided by Thr-10, Gly-11, Ser-12, Ile-13, and Asn-123. Lys-124 is a binding site for 1-deoxy-D-xylulose 5-phosphate. Glu-125 lines the NADPH pocket. A Mn(2+)-binding site is contributed by Asp-149. 4 residues coordinate 1-deoxy-D-xylulose 5-phosphate: Ser-150, Glu-151, Ser-185, and His-208. Glu-151 contributes to the Mn(2+) binding site. Gly-214 serves as a coordination point for NADPH. 4 residues coordinate 1-deoxy-D-xylulose 5-phosphate: Ser-221, Asn-226, Lys-227, and Glu-230. Glu-230 is a Mn(2+) binding site.

This sequence belongs to the DXR family. Mg(2+) serves as cofactor. Mn(2+) is required as a cofactor.

It carries out the reaction 2-C-methyl-D-erythritol 4-phosphate + NADP(+) = 1-deoxy-D-xylulose 5-phosphate + NADPH + H(+). It functions in the pathway isoprenoid biosynthesis; isopentenyl diphosphate biosynthesis via DXP pathway; isopentenyl diphosphate from 1-deoxy-D-xylulose 5-phosphate: step 1/6. In terms of biological role, catalyzes the NADPH-dependent rearrangement and reduction of 1-deoxy-D-xylulose-5-phosphate (DXP) to 2-C-methyl-D-erythritol 4-phosphate (MEP). This chain is 1-deoxy-D-xylulose 5-phosphate reductoisomerase, found in Shewanella frigidimarina (strain NCIMB 400).